Here is a 426-residue protein sequence, read N- to C-terminus: D-tagatose-1,6-bisphosphate aldolase subunit KbaZ (426 aa).

It belongs to the GatZ/KbaZ family. KbaZ subfamily. Forms a complex with KbaY.

It functions in the pathway carbohydrate metabolism; D-tagatose 6-phosphate degradation; D-glyceraldehyde 3-phosphate and glycerone phosphate from D-tagatose 6-phosphate: step 2/2. Functionally, component of the tagatose-1,6-bisphosphate aldolase KbaYZ that is required for full activity and stability of the Y subunit. Could have a chaperone-like function for the proper and stable folding of KbaY. When expressed alone, KbaZ does not show any aldolase activity. This Escherichia coli O8 (strain IAI1) protein is D-tagatose-1,6-bisphosphate aldolase subunit KbaZ.